The sequence spans 300 residues: MIRQRTLKNSIRATGVGLHTGEKVYLTLRPAPANAGIIFRRTDLDREIKATAAAVGDTRLSTCLVEDGVRVSTVEHLLSALAGLGIDNCYVDLSAAEVPIMDGSAAPFVFLVRSAGIKEQEAPKRFVRILEPVQVVDGDKWVAFEPFEGFKVSFTIDFDHPVFLDQHARAEVDFSSTSFIKEVSRARTFGFMKEIEALRASRLALGGSLDNAIVVDDYRVLNEDGLRYRDEFVKHKILDAIGDLYLLGSSLIGSFHGHKSGHALNNRLLRKLLEHEHAWEEVTFEELDELPIAYDQPVVA.

The Zn(2+) site is built by histidine 76, histidine 235, and aspartate 239. Histidine 262 serves as the catalytic Proton donor.

This sequence belongs to the LpxC family. It depends on Zn(2+) as a cofactor.

The catalysed reaction is a UDP-3-O-[(3R)-3-hydroxyacyl]-N-acetyl-alpha-D-glucosamine + H2O = a UDP-3-O-[(3R)-3-hydroxyacyl]-alpha-D-glucosamine + acetate. It participates in glycolipid biosynthesis; lipid IV(A) biosynthesis; lipid IV(A) from (3R)-3-hydroxytetradecanoyl-[acyl-carrier-protein] and UDP-N-acetyl-alpha-D-glucosamine: step 2/6. Catalyzes the hydrolysis of UDP-3-O-myristoyl-N-acetylglucosamine to form UDP-3-O-myristoylglucosamine and acetate, the committed step in lipid A biosynthesis. This is UDP-3-O-acyl-N-acetylglucosamine deacetylase from Halorhodospira halophila (strain DSM 244 / SL1) (Ectothiorhodospira halophila (strain DSM 244 / SL1)).